The chain runs to 302 residues: Putative T-box protein 34 (302 aa).

The segment at residues 5-180 (IVNEHKYREL…KMNLAPGSSQ (176 aa)) is a DNA-binding region (T-box).

Its subcellular location is the nucleus. This chain is Putative T-box protein 34 (tbx-34), found in Caenorhabditis elegans.